Consider the following 672-residue polypeptide: tRNA(Met) cytidine acetyltransferase TmcA (672 aa).

ATP contacts are provided by residues glutamine 180, 202–211 (GRGKSALAGQ), and arginine 319. The 183-residue stretch at 349–531 (IEISAFYQQA…SGCYTAMALL (183 aa)) folds into the N-acetyltransferase domain. Residues 461-463 (IAV), 468-474 (QREGIGQ), and arginine 506 each bind acetyl-CoA.

Belongs to the RNA cytidine acetyltransferase family. TmcA subfamily.

It localises to the cytoplasm. The enzyme catalyses cytidine(34) in elongator tRNA(Met) + acetyl-CoA + ATP + H2O = N(4)-acetylcytidine(34) in elongator tRNA(Met) + ADP + phosphate + CoA + H(+). Its function is as follows. Catalyzes the formation of N(4)-acetylcytidine (ac(4)C) at the wobble position of tRNA(Met), by using acetyl-CoA as an acetyl donor and ATP (or GTP). The chain is tRNA(Met) cytidine acetyltransferase TmcA from Salmonella typhimurium (strain LT2 / SGSC1412 / ATCC 700720).